The sequence spans 272 residues: Endoplasmic reticulum resident protein 27 (272 aa).

The first 25 residues, 1 to 25 (MEAMPSRCLFLLFLSTCKLSPEVVA), serve as a signal peptide directing secretion. A Thioredoxin domain is found at 38 to 151 (EPMRLTDVQA…LVTEYNAITA (114 aa)). The N-linked (GlcNAc...) asparagine glycan is linked to Asn99. The tract at residues 229-232 (DKWD) is PDIA3-binding site. Residues 269–272 (KVEL) carry the Prevents secretion from ER motif.

The protein belongs to the protein disulfide isomerase family. Interacts with PDIA3.

It localises to the endoplasmic reticulum lumen. In terms of biological role, specifically binds unfolded proteins and may recruit protein disulfide isomerase PDIA3 to unfolded substrates. Binds protein substrates via a hydrophobic pocket in the C-terminal domain. May play a role in the unfolded stress response. This Bos taurus (Bovine) protein is Endoplasmic reticulum resident protein 27 (ERP27).